Consider the following 77-residue polypeptide: Major outer membrane lipoprotein Lpp (77 aa).

The first 19 residues, 1–19 (MNRTKLVLGAVILGSHSAG), serve as a signal peptide directing secretion. Cysteine 20 carries the N-palmitoyl cysteine lipid modification. The S-diacylglycerol cysteine moiety is linked to residue cysteine 20. 2 repeats span residues 23-33 (NAKIDQLSSDV) and 37-47 (NAKVDQLSNDV). The stretch at 26-74 (IDQLSSDVQTLNAKVDQLSNDVNAMRSDVQAAKDDAARANQRLDNQAHA) forms a coiled coil. The disordered stretch occupies residues 56–77 (AAKDDAARANQRLDNQAHAYKK). Lysine 77 is modified (N6-murein peptidoglycan lysine).

Belongs to the Lpp family. Homotrimer.

The protein localises to the cell outer membrane. Its subcellular location is the secreted. It localises to the cell wall. Functionally, a highly abundant outer membrane lipoprotein that controls the distance between the inner and outer membranes. The only protein known to be covalently linked to the peptidoglycan network (PGN). Also non-covalently binds the PGN. The link between the cell outer membrane and PGN contributes to maintenance of the structural and functional integrity of the cell envelope, and maintains the correct distance between the PGN and the outer membrane. This Serratia marcescens protein is Major outer membrane lipoprotein Lpp.